The following is a 364-amino-acid chain: Aminomethyltransferase (364 aa).

Belongs to the GcvT family. The glycine cleavage system is composed of four proteins: P, T, L and H.

It catalyses the reaction N(6)-[(R)-S(8)-aminomethyldihydrolipoyl]-L-lysyl-[protein] + (6S)-5,6,7,8-tetrahydrofolate = N(6)-[(R)-dihydrolipoyl]-L-lysyl-[protein] + (6R)-5,10-methylene-5,6,7,8-tetrahydrofolate + NH4(+). Its function is as follows. The glycine cleavage system catalyzes the degradation of glycine. The sequence is that of Aminomethyltransferase from Escherichia coli O81 (strain ED1a).